Here is a 191-residue protein sequence, read N- to C-terminus: MRLTPELLVECYRRGLFPMAGPGGRVGLYRSDPRAVLELDALHVSKSLARVLRKGVYEVRIDQDFEAVIRACADREETWISEEIIRAFLGLHRRGLAHSVEAYDGEGRLAGGLYGVALGGAFFGESMFSRRPDASKVCLVRLVERLRERGYVLLDCQVQSPHLERMGAVEIPEAEFMRRLSEALRLDRAFA.

This sequence belongs to the L/F-transferase family.

The protein localises to the cytoplasm. It catalyses the reaction N-terminal L-lysyl-[protein] + L-leucyl-tRNA(Leu) = N-terminal L-leucyl-L-lysyl-[protein] + tRNA(Leu) + H(+). It carries out the reaction N-terminal L-arginyl-[protein] + L-leucyl-tRNA(Leu) = N-terminal L-leucyl-L-arginyl-[protein] + tRNA(Leu) + H(+). The enzyme catalyses L-phenylalanyl-tRNA(Phe) + an N-terminal L-alpha-aminoacyl-[protein] = an N-terminal L-phenylalanyl-L-alpha-aminoacyl-[protein] + tRNA(Phe). Functionally, functions in the N-end rule pathway of protein degradation where it conjugates Leu, Phe and, less efficiently, Met from aminoacyl-tRNAs to the N-termini of proteins containing an N-terminal arginine or lysine. This is Leucyl/phenylalanyl-tRNA--protein transferase from Rubrobacter xylanophilus (strain DSM 9941 / JCM 11954 / NBRC 16129 / PRD-1).